A 220-amino-acid polypeptide reads, in one-letter code: Ribonuclease HII (220 aa).

One can recognise an RNase H type-2 domain in the interval 1-219; sequence MMIAGIDEAG…VENIREELKK (219 aa). D7, E8, and D105 together coordinate a divalent metal cation.

It belongs to the RNase HII family. Requires Mn(2+) as cofactor. Mg(2+) is required as a cofactor.

The protein localises to the cytoplasm. The enzyme catalyses Endonucleolytic cleavage to 5'-phosphomonoester.. Functionally, endonuclease that specifically degrades the RNA of RNA-DNA hybrids. This is Ribonuclease HII from Methanosarcina mazei (strain ATCC BAA-159 / DSM 3647 / Goe1 / Go1 / JCM 11833 / OCM 88) (Methanosarcina frisia).